The chain runs to 511 residues: ATP synthase subunit alpha (511 aa).

Residue 169-176 (GDRQTGKT) coordinates ATP.

Belongs to the ATPase alpha/beta chains family. As to quaternary structure, F-type ATPases have 2 components, CF(1) - the catalytic core - and CF(0) - the membrane proton channel. CF(1) has five subunits: alpha(3), beta(3), gamma(1), delta(1), epsilon(1). CF(0) has three main subunits: a(1), b(2) and c(9-12). The alpha and beta chains form an alternating ring which encloses part of the gamma chain. CF(1) is attached to CF(0) by a central stalk formed by the gamma and epsilon chains, while a peripheral stalk is formed by the delta and b chains.

The protein localises to the cell inner membrane. The catalysed reaction is ATP + H2O + 4 H(+)(in) = ADP + phosphate + 5 H(+)(out). Its function is as follows. Produces ATP from ADP in the presence of a proton gradient across the membrane. The alpha chain is a regulatory subunit. This Bartonella henselae (strain ATCC 49882 / DSM 28221 / CCUG 30454 / Houston 1) (Rochalimaea henselae) protein is ATP synthase subunit alpha.